The chain runs to 577 residues: Zinc finger-containing ubiquitin peptidase 1 (577 aa).

The C2H2-type 1 zinc-finger motif lies at 2-24; the sequence is LSCNICGETVNSEPDMKAHLIVH. Residues 29–52 form a C2H2-type 2; atypical zinc finger; sequence IICPFCKLSGINYNEICFHIETVH. A compositionally biased stretch (basic and acidic residues) spans 124-137; that stretch reads ESRKYQKSREKKPG. A disordered region spans residues 124–145; sequence ESRKYQKSREKKPGLSEAQGSI. The segment at 153–176 adopts a C2H2-type 3; atypical zinc-finger fold; sequence PECPFCGKIEGCSQDMEIHVKTKH. Residues 192 to 214 form a C2H2-type 4 zinc finger; that stretch reads YDCPMCGLVCTNYHILQEHVDLH. The MIU stretch occupies residues 225–247; sequence DRVQCSSDRELAHRLQQEEDRKR. Residues 238 to 260 form a disordered region; that stretch reads RLQQEEDRKRKSEESRQEREEFQ. Residues 248-273 are zUBD/ZHA; the sequence is KSEESRQEREEFQKLQRQYGLDNSGG. Lysine 261 bears the N6-acetyllysine mark. The active-site Nucleophile is cysteine 359. Histidine 490 acts as the Proton acceptor in catalysis. Aspartate 511 is an active-site residue.

This sequence belongs to the peptidase C78 family. ZUFSP subfamily. As to quaternary structure, interacts with RPA1 and RPA2.

The protein localises to the cytoplasm. It is found in the nucleus. It catalyses the reaction Thiol-dependent hydrolysis of ester, thioester, amide, peptide and isopeptide bonds formed by the C-terminal Gly of ubiquitin (a 76-residue protein attached to proteins as an intracellular targeting signal).. In terms of biological role, deubiquitinase with endodeubiquitinase activity that specifically interacts with and cleaves 'Lys-63'-linked long polyubiquitin chains. Shows only weak activity against 'Lys-11' and 'Lys-48'-linked chains. Plays an important role in genome stability pathways, functioning to prevent spontaneous DNA damage and also promote cellular survival in response to exogenous DNA damage. Modulates the ubiquitination status of replication protein A (RPA) complex proteins in response to replication stress. The chain is Zinc finger-containing ubiquitin peptidase 1 from Mus musculus (Mouse).